The chain runs to 233 residues: Purine nucleoside phosphorylase DeoD-type (233 aa).

Residue His4 participates in a purine D-ribonucleoside binding. Phosphate-binding positions include Gly20, Arg24, Arg43, and 87–90 (RVGT). Residues Glu162, 179–181 (EME), and 203–204 (SD) each bind a purine D-ribonucleoside. Asp204 functions as the Proton donor in the catalytic mechanism.

This sequence belongs to the PNP/UDP phosphorylase family. As to quaternary structure, homohexamer; trimer of homodimers.

It catalyses the reaction a purine D-ribonucleoside + phosphate = a purine nucleobase + alpha-D-ribose 1-phosphate. The catalysed reaction is a purine 2'-deoxy-D-ribonucleoside + phosphate = a purine nucleobase + 2-deoxy-alpha-D-ribose 1-phosphate. Functionally, catalyzes the reversible phosphorolytic breakdown of the N-glycosidic bond in the beta-(deoxy)ribonucleoside molecules, with the formation of the corresponding free purine bases and pentose-1-phosphate. This is Purine nucleoside phosphorylase DeoD-type from Alkaliphilus metalliredigens (strain QYMF).